The following is a 159-amino-acid chain: SsrA-binding protein (159 aa).

Belongs to the SmpB family.

It is found in the cytoplasm. In terms of biological role, required for rescue of stalled ribosomes mediated by trans-translation. Binds to transfer-messenger RNA (tmRNA), required for stable association of tmRNA with ribosomes. tmRNA and SmpB together mimic tRNA shape, replacing the anticodon stem-loop with SmpB. tmRNA is encoded by the ssrA gene; the 2 termini fold to resemble tRNA(Ala) and it encodes a 'tag peptide', a short internal open reading frame. During trans-translation Ala-aminoacylated tmRNA acts like a tRNA, entering the A-site of stalled ribosomes, displacing the stalled mRNA. The ribosome then switches to translate the ORF on the tmRNA; the nascent peptide is terminated with the 'tag peptide' encoded by the tmRNA and targeted for degradation. The ribosome is freed to recommence translation, which seems to be the essential function of trans-translation. The chain is SsrA-binding protein from Idiomarina loihiensis (strain ATCC BAA-735 / DSM 15497 / L2-TR).